Here is a 354-residue protein sequence, read N- to C-terminus: Methionine import ATP-binding protein MetN 2 (354 aa).

The ABC transporter domain maps to 6-250 (IELKNISVHF…PQKPLTKEFI (245 aa)). Position 42–49 (42–49 (GYSGAGKS)) interacts with ATP.

It belongs to the ABC transporter superfamily. Methionine importer (TC 3.A.1.24) family. The complex is composed of two ATP-binding proteins (MetN), two transmembrane proteins (MetI) and a solute-binding protein (MetQ).

It is found in the cell membrane. The catalysed reaction is L-methionine(out) + ATP + H2O = L-methionine(in) + ADP + phosphate + H(+). It catalyses the reaction D-methionine(out) + ATP + H2O = D-methionine(in) + ADP + phosphate + H(+). Functionally, part of the ABC transporter complex MetNIQ involved in methionine import. Responsible for energy coupling to the transport system. The chain is Methionine import ATP-binding protein MetN 2 from Oenococcus oeni (strain ATCC BAA-331 / PSU-1).